The primary structure comprises 1428 residues: DNA polymerase III PolC-type (1428 aa).

One can recognise an Exonuclease domain in the interval 414 to 570 (FVVFDVETTG…YDAEATGYLL (157 aa)).

The protein belongs to the DNA polymerase type-C family. PolC subfamily.

It localises to the cytoplasm. It carries out the reaction DNA(n) + a 2'-deoxyribonucleoside 5'-triphosphate = DNA(n+1) + diphosphate. Functionally, required for replicative DNA synthesis. This DNA polymerase also exhibits 3' to 5' exonuclease activity. The sequence is that of DNA polymerase III PolC-type from Oceanobacillus iheyensis (strain DSM 14371 / CIP 107618 / JCM 11309 / KCTC 3954 / HTE831).